Here is a 308-residue protein sequence, read N- to C-terminus: PHO85 cyclin-2 (308 aa).

Residues 18–146 enclose the Cyclin N-terminal domain; sequence EMVQYLASTT…LLEYFDWDVT (129 aa). The disordered stretch occupies residues 248–270; the sequence is SPRTYNIDSKHDNKENRPIPTIK. The span at 255–264 shows a compositional bias: basic and acidic residues; it reads DSKHDNKENR.

The protein belongs to the cyclin family. PCL1,2 subfamily. As to quaternary structure, forms a cyclin-CDK complex with PHO85. Interacts with RVS167.

It localises to the cytoplasm. The protein resides in the nucleus. Functionally, G1/S-specific cyclin partner of the cyclin-dependent kinase (CDK) PHO85. Essential for the control of the cell cycle at the G1/S (start) transition. Together with cyclin PCL1, positively controls degradation of sphingoid long chain base kinase LCB4. The PCL2-PHO85 cyclin-CDK holoenzyme phosphorylates LCB4, which is required for its ubiquitination and degradation. PCL2-PHO85 also phosphorylates RVS167, linking cyclin-CDK activity with organization of the actin cytoskeleton. This is PHO85 cyclin-2 (PCL2) from Saccharomyces cerevisiae (strain ATCC 204508 / S288c) (Baker's yeast).